We begin with the raw amino-acid sequence, 740 residues long: MSKIIYTKTDEAPALATLSFLPIVKAFAQTAGVDVETSDISVAARVLAEFPEYLTEEQRVPNNLEALGKLTQDPNANIIKLPNISASVQQLKAAIKELQGKGYAIPDFPDEPKNAEEEEIRRRYGKSLGSSVNPVLREGNSDRRAPKAVKNYARKHPHSMGEWKQWSQTHVSHMHSGDFYDGEQSMTLDKARTVRMELLLEDGTTKVLKPKIALLDKEVIDLMFMSKKALLEFYEREMEDCREAGILFSLHVKATMMKVSHPIVFGHAVRIYYKDAFQKHGALFDELGINVNNGMASLYEKITELPASLREEIERDLHACQVHRPRLAMVDSSKGITNFHSPSDVIVDASMPAMIRNGGKMWGADGKLYDCKAVMPESTFARIYQEMINFCKWHGNFDPTTMGTVPNVGLMAQKAEEYGSHDKTFESSDNGIARIVDIDSGEVLLEQRVEKGDIWRMCQTKDDPIQDWVKLAVRRARESDTPVIFWLDPYRPHENELIKKVKTYLKDHDTNGLHIEIMSQVRAMRYTLERVARGLDTISATGNILRDYLTDLFPILELGTSAKMLSVVPLMKGGGLFETGAGGSAPKHVQQLIEENHLRWDSLGEFLALTESLEHLAKNDDNAKAKVLADALDRATETLLLNDKSPSRKTGELDNRGSHFYLAKYWAEELAAQDENSELKAQFAPLAQKLEENEAAIVEQLNEVQGKSMDLKGYYLADEALAEKAMRPSPLFNEAIASLS.

NADP(+)-binding residues include Asn-83 and Ser-85. Residues Ser-130, Asn-133, Arg-137, Arg-143, and Lys-253 each contribute to the D-threo-isocitrate site. Position 133 (Asn-133) interacts with NADP(+). Asp-348 serves as a coordination point for Mg(2+). D-threo-isocitrate is bound by residues Tyr-418 and Arg-546. 2 residues coordinate Mg(2+): Asp-547 and Asp-551. Ser-584, His-588, Arg-599, Asp-601, and Arg-648 together coordinate NADP(+).

The protein belongs to the monomeric-type IDH family. Monomer. Requires Mg(2+) as cofactor. Mn(2+) is required as a cofactor.

It carries out the reaction D-threo-isocitrate + NADP(+) = 2-oxoglutarate + CO2 + NADPH. IDH activity is not significantly affected by monovalent cations. The combined addition of Mn(2+) and another divalent cation results in the decrease of the activity. Functionally, catalyzes the oxidative decarboxylation of isocitrate to 2-oxoglutarate and carbon dioxide with the concomitant reduction of NADP(+). Cannot use NAD(+). The polypeptide is Isocitrate dehydrogenase [NADP] 2 (Psychrobacter sp. (strain 13A)).